The chain runs to 321 residues: tRNA uridine(34) hydroxylase (321 aa).

Positions 135-233 (DDPDTLVIDT…YLEQVPEEES (99 aa)) constitute a Rhodanese domain. Residue C193 is the Cysteine persulfide intermediate of the active site. The disordered stretch occupies residues 301 to 321 (RQRQMDQLSSASSKKSDDFSL).

The protein belongs to the TrhO family.

The catalysed reaction is uridine(34) in tRNA + AH2 + O2 = 5-hydroxyuridine(34) in tRNA + A + H2O. Functionally, catalyzes oxygen-dependent 5-hydroxyuridine (ho5U) modification at position 34 in tRNAs. The sequence is that of tRNA uridine(34) hydroxylase from Parasynechococcus marenigrum (strain WH8102).